The chain runs to 308 residues: Phosphoribosylaminoimidazole-succinocarboxamide synthase (308 aa).

The protein belongs to the SAICAR synthetase family.

It catalyses the reaction 5-amino-1-(5-phospho-D-ribosyl)imidazole-4-carboxylate + L-aspartate + ATP = (2S)-2-[5-amino-1-(5-phospho-beta-D-ribosyl)imidazole-4-carboxamido]succinate + ADP + phosphate + 2 H(+). The protein operates within purine metabolism; IMP biosynthesis via de novo pathway; 5-amino-1-(5-phospho-D-ribosyl)imidazole-4-carboxamide from 5-amino-1-(5-phospho-D-ribosyl)imidazole-4-carboxylate: step 1/2. The sequence is that of Phosphoribosylaminoimidazole-succinocarboxamide synthase from Xylella fastidiosa (strain 9a5c).